The primary structure comprises 453 residues: Serine incorporator 1 (453 aa).

A lipid anchor (N-myristoyl glycine) is attached at Gly2. Over Gly2–Arg39 the chain is Cytoplasmic. A helical membrane pass occupies residues Leu40 to Gly60. At Met61–Lys88 the chain is on the lumenal side. A helical transmembrane segment spans residues Ala89–Ile109. At Lys110–Asn123 the chain is on the cytoplasmic side. A helical membrane pass occupies residues Gly124–Pro144. Residues Glu145–Val151 lie on the Lumenal side of the membrane. Residues Trp152–Ile172 form a helical membrane-spanning segment. At Asp173–Ala197 the chain is on the cytoplasmic side. Residues Leu198–Val218 traverse the membrane as a helical segment. The Lumenal portion of the chain corresponds to Tyr219–Ala231. Residues Phe232 to Ile252 form a helical membrane-spanning segment. Over Gln253 to Ser259 the chain is Cytoplasmic. The helical transmembrane segment at Gly260–Thr280 threads the bilayer. At Asn281–Ser309 the chain is on the lumenal side. The helical transmembrane segment at Val310 to Tyr330 threads the bilayer. The Cytoplasmic segment spans residues Ser331 to Ser387. Ser351 is subject to Phosphoserine. At Thr352 the chain carries Phosphothreonine. 2 positions are modified to phosphoserine: Ser361 and Ser364. Residues Phe388–Tyr408 traverse the membrane as a helical segment. The Lumenal segment spans residues Arg409–Lys426. The chain crosses the membrane as a helical span at residues Ile427–Leu447. Residues Thr448 to Asp453 are Cytoplasmic-facing.

It belongs to the TDE1 family. In terms of assembly, interacts with SPTLC1.

It localises to the endoplasmic reticulum membrane. Enhances the incorporation of serine into phosphatidylserine and sphingolipids. The chain is Serine incorporator 1 (SERINC1) from Pongo abelii (Sumatran orangutan).